The following is a 338-amino-acid chain: DNA-directed RNA polymerase subunit alpha (338 aa).

The alpha N-terminal domain (alpha-NTD) stretch occupies residues 1 to 234 (MIHKNWAELI…DQLSIFVNFD (234 aa)). The alpha C-terminal domain (alpha-CTD) stretch occupies residues 250 to 338 (FNPLLLKKVD…DLAKKFEDAF (89 aa)).

Belongs to the RNA polymerase alpha chain family. In terms of assembly, homodimer. The RNAP catalytic core consists of 2 alpha, 1 beta, 1 beta' and 1 omega subunit. When a sigma factor is associated with the core the holoenzyme is formed, which can initiate transcription.

It catalyses the reaction RNA(n) + a ribonucleoside 5'-triphosphate = RNA(n+1) + diphosphate. Functionally, DNA-dependent RNA polymerase catalyzes the transcription of DNA into RNA using the four ribonucleoside triphosphates as substrates. The polypeptide is DNA-directed RNA polymerase subunit alpha (Ruegeria pomeroyi (strain ATCC 700808 / DSM 15171 / DSS-3) (Silicibacter pomeroyi)).